The sequence spans 344 residues: Phosphoribosylformylglycinamidine cyclo-ligase (344 aa).

The protein belongs to the AIR synthase family.

Its subcellular location is the cytoplasm. It carries out the reaction 2-formamido-N(1)-(5-O-phospho-beta-D-ribosyl)acetamidine + ATP = 5-amino-1-(5-phospho-beta-D-ribosyl)imidazole + ADP + phosphate + H(+). Its pathway is purine metabolism; IMP biosynthesis via de novo pathway; 5-amino-1-(5-phospho-D-ribosyl)imidazole from N(2)-formyl-N(1)-(5-phospho-D-ribosyl)glycinamide: step 2/2. The sequence is that of Phosphoribosylformylglycinamidine cyclo-ligase from Haemophilus influenzae (strain PittGG).